Reading from the N-terminus, the 485-residue chain is MSYPQFGYPYSSAPQFLMSTNSLTPCCESGGRTLPESGPAAPAQTPVYCPVYESRLLATARHELNSAAALGVYGGPYGGPQGYGNYVTYGTEAPAFYSLNTLEAKDGGGSAHAGISPAAAYYPYEHSLSQYQYDRYGAMDGGTRRKNATRETTSTLKAWLQEHRKNPYPTKGEKIMLAIITKMTLTQVSTWFANARRRLKKENKMTWPPRNKCSDEKRPYEEEEEEEEECSQEDAMKSEKAEEPTGKEEKELELSDLEDLDAAESESSECEMRRPFPHPHPHPLPGGGPPPRAAEPPAAAAEEEEEEAAERARGCLKPAAEECEAALLGARPRGCEAKLCFPQGQPLLEAKPRIWSLAHTATSLNQAEYPSCMLKRSGGSAAAAVSAPVSVMDRHQDSPVTNLRNWVDGVFHDPLFRHSTLNQALSNTTVSWATTKGAILETGALGRSVGNGANVLKGQLANLAHQDSSKEFLAFPKAGSKMFCS.

Residues 142–203 constitute a DNA-binding region (homeobox; TALE-type); that stretch reads GTRRKNATRE…NARRRLKKEN (62 aa). The tract at residues 206–313 is disordered; it reads TWPPRNKCSD…EEEEAAERAR (108 aa). Over residues 221–232 the composition is skewed to acidic residues; it reads EEEEEEEEECSQ. Residues 234–253 are compositionally biased toward basic and acidic residues; it reads DAMKSEKAEEPTGKEEKELE. The span at 254 to 269 shows a compositional bias: acidic residues; the sequence is LSDLEDLDAAESESSE. A compositionally biased stretch (pro residues) spans 282-294; that stretch reads HPLPGGGPPPRAA.

It belongs to the TALE/IRO homeobox family. As to expression, ventricles of the heart, developing feather buds, retina, hindbrain.

The protein resides in the nucleus. In terms of biological role, regulates the chamber-specific expression of myosin isoforms by activating the expression of the ventricle myosin heavy chain-1 (Vmhc1) and suppressing the expression of the atrial myosin heavy chain-1 (Amhc1) in the ventricles. May play a critical role in establishing chamber-specific gene expression in the developing heart. This Gallus gallus (Chicken) protein is Iroquois-class homeodomain protein IRX-4 (IRX4).